Reading from the N-terminus, the 348-residue chain is D-alanine--D-alanine ligase (348 aa).

The ATP-grasp domain maps to 132–334; it reads KRVLESIGIP…YPDLIEVLVT (203 aa). An ATP-binding site is contributed by 162-217; the sequence is LARLTFPIFVKPANMGSSVGISKAQTKVELRKAIQLALTYDSRVLIEQGVVAREIE. Aspartate 288, glutamate 301, and asparagine 303 together coordinate Mg(2+).

This sequence belongs to the D-alanine--D-alanine ligase family. It depends on Mg(2+) as a cofactor. Mn(2+) is required as a cofactor.

It is found in the cytoplasm. The catalysed reaction is 2 D-alanine + ATP = D-alanyl-D-alanine + ADP + phosphate + H(+). Its pathway is cell wall biogenesis; peptidoglycan biosynthesis. Its function is as follows. Cell wall formation. The chain is D-alanine--D-alanine ligase from Streptococcus pyogenes serotype M2 (strain MGAS10270).